A 510-amino-acid chain; its full sequence is MTDAYVGAIDQGTTGTRFIVFDQHGDVVANTYEKHEQHYPEPGWVEHDPLEIWENTKSVVTAGLSAAGLDADDLAAIGITNQRETTVVWDAASGRPIHNALVWQDRRTTSRVESLEENGKIERIREKTGLEADAYFSATKTEWLLDEAEPLKLSSARASSLRDRARDGELLMGTIDSWLIYNLTGEHITDVSNASRTMLYNITDLEWDDWLLEEFDIPREMLPEVRPSSDEAVYGHTDPDGFLGAAVPVTAALGDQQAALFGQTCFDAGDAKNTYGTGSFYLMNTGEDAVSSEHGLLTTIGFQLSGEPVQYALEGSIFVTGAAIEWLEDVDLINNAAQTAELASSVDTTDGVYMVPAFTGLGAPHWDGRARGTLVGMTRGTRKAHIVRATLESIAYQTRDIAAAMEADSGVSTTTLRVDGGAVKNNFLCQLQSDIIQTDLARPEVDETTALGAAYAAGLAVGYWDSLDDLRENWRVDRSFEPEMDPSEADSKYGRWEDAVDRSLAWATED.

An ADP-binding site is contributed by Thr-13. ATP is bound by residues Thr-13 and Thr-14. Thr-13 contacts sn-glycerol 3-phosphate. Arg-17 is a binding site for ADP. Sn-glycerol 3-phosphate is bound by residues Arg-83, Glu-84, Tyr-135, and Asp-255. Glycerol-binding residues include Arg-83, Glu-84, Tyr-135, Asp-255, and Gln-256. The ADP site is built by Thr-277, Gly-321, Gly-421, and Asn-425. Thr-277, Gly-321, and Gly-421 together coordinate ATP.

It belongs to the FGGY kinase family.

The catalysed reaction is glycerol + ATP = sn-glycerol 3-phosphate + ADP + H(+). It participates in polyol metabolism; glycerol degradation via glycerol kinase pathway; sn-glycerol 3-phosphate from glycerol: step 1/1. In terms of biological role, key enzyme in the regulation of glycerol uptake and metabolism. Catalyzes the phosphorylation of glycerol to yield sn-glycerol 3-phosphate. The sequence is that of Glycerol kinase from Halobacterium salinarum (strain ATCC 29341 / DSM 671 / R1).